The primary structure comprises 163 residues: Seed allergenic protein RAG1 (163 aa).

The N-terminal stretch at 1-27 is a signal peptide; it reads MASNKVVFSVLLLVVLSVLAAAMATMA. 5 disulfide bridges follow: cysteine 39/cysteine 90, cysteine 53/cysteine 78, cysteine 61/cysteine 122, cysteine 79/cysteine 138, and cysteine 92/cysteine 150.

Belongs to the cereal trypsin/alpha-amylase inhibitor family. Post-translationally, five disulfide bonds are present.

It localises to the secreted. In terms of biological role, seed storage protein. The protein is Seed allergenic protein RAG1 (RAG1) of Oryza sativa subsp. japonica (Rice).